The sequence spans 64 residues: Large ribosomal subunit protein bL35 (64 aa).

Belongs to the bacterial ribosomal protein bL35 family.

This is Large ribosomal subunit protein bL35 from Desulforamulus reducens (strain ATCC BAA-1160 / DSM 100696 / MI-1) (Desulfotomaculum reducens).